The primary structure comprises 180 residues: Bifunctional protein PyrR (180 aa).

The short motif at 101-113 is the PRPP-binding element; it reads VILIDDVLFTGRT.

Belongs to the purine/pyrimidine phosphoribosyltransferase family. PyrR subfamily. In terms of assembly, homodimer and homohexamer; in equilibrium.

It carries out the reaction UMP + diphosphate = 5-phospho-alpha-D-ribose 1-diphosphate + uracil. Functionally, regulates transcriptional attenuation of the pyrimidine nucleotide (pyr) operon by binding in a uridine-dependent manner to specific sites on pyr mRNA. This disrupts an antiterminator hairpin in the RNA and favors formation of a downstream transcription terminator, leading to a reduced expression of downstream genes. In terms of biological role, also displays a weak uracil phosphoribosyltransferase activity which is not physiologically significant. The protein is Bifunctional protein PyrR of Oceanobacillus iheyensis (strain DSM 14371 / CIP 107618 / JCM 11309 / KCTC 3954 / HTE831).